Here is a 350-residue protein sequence, read N- to C-terminus: Phosphotriesterase-related protein (350 aa).

H22, H24, E169, H201, H230, and D298 together coordinate a divalent metal cation.

It belongs to the metallo-dependent hydrolases superfamily. Phosphotriesterase family. A divalent metal cation is required as a cofactor.

The chain is Phosphotriesterase-related protein from Drosophila mojavensis (Fruit fly).